The chain runs to 176 residues: 3-hydroxyacyl-[acyl-carrier-protein] dehydratase FabZ (176 aa).

H54 is an active-site residue.

It belongs to the thioester dehydratase family. FabZ subfamily.

The protein localises to the cytoplasm. It catalyses the reaction a (3R)-hydroxyacyl-[ACP] = a (2E)-enoyl-[ACP] + H2O. Its function is as follows. Involved in unsaturated fatty acids biosynthesis. Catalyzes the dehydration of short chain beta-hydroxyacyl-ACPs and long chain saturated and unsaturated beta-hydroxyacyl-ACPs. The protein is 3-hydroxyacyl-[acyl-carrier-protein] dehydratase FabZ of Yersinia pseudotuberculosis serotype O:1b (strain IP 31758).